The chain runs to 433 residues: CinA-like protein (433 aa).

This sequence belongs to the CinA family.

This chain is CinA-like protein, found in Prochlorococcus marinus (strain MIT 9515).